The sequence spans 233 residues: Nucleoside diphosphate kinase 2, chloroplastic (233 aa).

A chloroplast-targeting transit peptide spans 1 to 67 (MEAMSGLSSP…LISHSLPRKK (67 aa)). ATP contacts are provided by Lys93, Phe141, Arg169, Thr175, Arg186, and Asn196. His199 acts as the Pros-phosphohistidine intermediate in catalysis.

It belongs to the NDK family. It depends on Mg(2+) as a cofactor.

The protein localises to the plastid. It is found in the chloroplast. The enzyme catalyses a 2'-deoxyribonucleoside 5'-diphosphate + ATP = a 2'-deoxyribonucleoside 5'-triphosphate + ADP. The catalysed reaction is a ribonucleoside 5'-diphosphate + ATP = a ribonucleoside 5'-triphosphate + ADP. Functionally, major role in the synthesis of nucleoside triphosphates other than ATP. The ATP gamma phosphate is transferred to the NDP beta phosphate via a ping-pong mechanism, using a phosphorylated active-site intermediate. This chain is Nucleoside diphosphate kinase 2, chloroplastic (NDPK2), found in Spinacia oleracea (Spinach).